Reading from the N-terminus, the 498-residue chain is Diacylglycerol O-acyltransferase 1 (498 aa).

A disordered region spans residues 1–66; that stretch reads MGDRGGAGSS…AHTRDKDRQT (66 aa). Over 1-92 the chain is Cytoplasmic; it reads MGDRGGAGSS…SLFSSDSGFS (92 aa). The tract at residues 1–96 is involved in homomerization; that stretch reads MGDRGGAGSS…SDSGFSNYRG (96 aa). The residue at position 20 (serine 20) is a Phosphoserine. Positions 58–68 are enriched in basic and acidic residues; that stretch reads HTRDKDRQTSV. The chain crosses the membrane as a helical span at residues 93–127; that stretch reads NYRGILNWCVVMLILSNARLSLENLIKYGILVDPI. Topologically, residues 128 to 139 are lumenal; the sequence is QVVSLFLKDPYS. The extracellular loop 1 (EL1) stretch occupies residues 128–139; it reads QVVSLFLKDPYS. Residues 140 to 165 form a helical membrane-spanning segment; that stretch reads WPAPCLIIASNIFIVATFQIEKRLSV. An MBOAT fold region spans residues 140-498; sequence WPAPCLIIAS…VLNYDAPVGA (359 aa). Topologically, residues 166–170 are cytoplasmic; the sequence is GALTE. A helical transmembrane segment spans residues 171-193; sequence QMGLLLHVVNLATIICFPAAVAL. The Lumenal segment spans residues 194–200; sequence LVESITP. The chain crosses the membrane as a helical span at residues 201–232; the sequence is VGSLFALASYSIIFLKLSSYRDVNLWCRQRRV. At 233–284 the chain is on the cytoplasmic side; that stretch reads KAKAVSAGKKVSGAAAQNTVSYPDNLTYRDLYYFIFAPTLCYELNFPRSPRI. The segment at 235 to 287 is intracellular loop 1 (IL1); it reads KAVSAGKKVSGAAAQNTVSYPDNLTYRDLYYFIFAPTLCYELNFPRSPRIRKR. The chain crosses the membrane as a helical span at residues 285 to 319; that stretch reads RKRFLLRRVLEMLFFTQLQVGLIQQWMVPTIQNSM. Residues 320–326 lie on the Lumenal side of the membrane; that stretch reads KPFKDMD. The chain crosses the membrane as a helical span at residues 327–364; that stretch reads YSRIIERLLKLAVPNHLIWLIFFYWLFHSCLNAVAELL. Residues 365–410 lie on the Cytoplasmic side of the membrane; sequence QFGDREFYRDWWNAESVTYFWQNWNIPVHKWCIRHFYKPMLRLGSN. Positions 365-410 are intracellular loop 2 (IL2); the sequence is QFGDREFYRDWWNAESVTYFWQNWNIPVHKWCIRHFYKPMLRLGSN. Residues 371-377 carry the FYXDWWN motif motif; that stretch reads FYRDWWN. An acyl-CoA-binding positions include 385–393, tyrosine 401, and arginine 415; that span reads WQNWNIPVH. The tract at residues 391-405 is amphipathic helix (AH); sequence PVHKWCIRHFYKPML. The helical transmembrane segment at 411 to 431 threads the bilayer; that stretch reads KWMARTGVFWASAFFHEYLVS. Histidine 426 is an active-site residue. Topologically, residues 432–439 are lumenal; that stretch reads IPLRMFRL. The chain crosses the membrane as a helical span at residues 440-458; the sequence is WAFTAMMAQVPLAWIVNRF. Residues 459-460 are Cytoplasmic-facing; that stretch reads FQ. The chain crosses the membrane as a helical span at residues 461-492; sequence GNYGNAAVWVTLIIGQPVAVLMYVHDYYVLNY. Residue tyrosine 488 coordinates an acyl-CoA. The Lumenal segment spans residues 493-498; it reads DAPVGA.

The protein belongs to the membrane-bound acyltransferase family. Sterol o-acyltransferase subfamily. Homodimer or homotetramer; both forms have similar enzymatic activities.

The protein localises to the endoplasmic reticulum membrane. The enzyme catalyses an acyl-CoA + a 1,2-diacyl-sn-glycerol = a triacyl-sn-glycerol + CoA. It catalyses the reaction all-trans-retinol + an acyl-CoA = an all-trans-retinyl ester + CoA. The catalysed reaction is 2-(9Z-octadecenoyl)-glycerol + (9Z)-octadecenoyl-CoA = 1,2-di-(9Z-octadecenoyl)-sn-glycerol + CoA. It carries out the reaction 1,2-di-(9Z-octadecenoyl)-sn-glycerol + (9Z)-octadecenoyl-CoA = 1,2,3-tri-(9Z-octadecenoyl)-glycerol + CoA. The enzyme catalyses all-trans-retinol + hexadecanoyl-CoA = all-trans-retinyl hexadecanoate + CoA. It catalyses the reaction 1-O-(9Z-octadecenyl)-glycerol + (9Z)-octadecenoyl-CoA = 1-O-(9Z-octadecyl)-3-(9Z-octadecenoyl)-glycerol + CoA. The catalysed reaction is 1-O-(9Z-octadecyl)-3-(9Z-octadecenoyl)-glycerol + (9Z)-octadecenoyl-CoA = 1-O-(9Z-octadecenyl)-2,3-di-(9Z-octadecenoyl)glycerol + CoA. It carries out the reaction 1-(9Z-octadecenoyl)-glycerol + (9Z)-octadecenoyl-CoA = 1,2-di-(9Z-octadecenoyl)-glycerol + CoA. The enzyme catalyses 1,2-di-(9Z-octadecenoyl)-glycerol + (9Z)-octadecenoate + H(+) = 1,2,3-tri-(9Z-octadecenoyl)-glycerol + H2O. It catalyses the reaction 1-octadecanoyl-2-(5Z,8Z,11Z,14Z-eicosatetraenoyl)-sn-glycerol + (9Z)-octadecenoyl-CoA = 1-octadecanoyl-2-(5Z,8Z,11Z,14Z)-eicosatetraenoyl-3-(9Z)-octadecenoyl-sn-glycerol + CoA. The catalysed reaction is hexadecane-1,2-diol + 2 hexadecanoyl-CoA = 1,2-O,O-dihexadecanoyl-1,2-hexadecanediol + 2 CoA. It carries out the reaction hexadecane-1,2-diol + hexadecanoyl-CoA = 2-hydroxyhexadecyl hexadecanoate + CoA. The enzyme catalyses 2-(9Z-octadecenoyl)-glycerol + hexadecanoyl-CoA = 1-hexadecanoyl-2-(9Z-octadecenoyl)-sn-glycerol + CoA. It catalyses the reaction 1,2-di-(9Z-octadecenoyl)-sn-glycerol + hexadecanoyl-CoA = 1,2-di-(9Z)-octadecenoyl-3-hexadecanoyl-sn-glycerol + CoA. The catalysed reaction is hexadecan-1-ol + hexadecanoyl-CoA = hexadecanyl hexadecanoate + CoA. It carries out the reaction 13-cis-retinol + hexadecanoyl-CoA = 13-cis-retinyl hexadecanoate + CoA. The enzyme catalyses 1,3-di-(9Z-octadecenoyl)-glycerol + (9Z)-octadecenoyl-CoA = 1,2,3-tri-(9Z-octadecenoyl)-glycerol + CoA. It catalyses the reaction 2,3-di-(9Z)-octadecenoyl-sn-glycerol + (9Z)-octadecenoyl-CoA = 1,2,3-tri-(9Z-octadecenoyl)-glycerol + CoA. It functions in the pathway lipid metabolism; glycerolipid metabolism. In terms of biological role, catalyzes the terminal and only committed step in triacylglycerol synthesis by using diacylglycerol and fatty acyl CoA as substrates. Highly expressed in epithelial cells of the small intestine and its activity is essential for the absorption of dietary fats. In liver, plays a role in esterifying exogenous fatty acids to glycerol, and is required to synthesize fat for storage. Also present in female mammary glands, where it produces fat in the milk. May be involved in VLDL (very low density lipoprotein) assembly. In contrast to DGAT2 it is not essential for survival. Functions as the major acyl-CoA retinol acyltransferase (ARAT) in the skin, where it acts to maintain retinoid homeostasis and prevent retinoid toxicity leading to skin and hair disorders. Exhibits additional acyltransferase activities, includin acyl CoA:monoacylglycerol acyltransferase (MGAT), wax monoester and wax diester synthases. Also able to use 1-monoalkylglycerol (1-MAkG) as an acyl acceptor for the synthesis of monoalkyl-monoacylglycerol (MAMAG). This is Diacylglycerol O-acyltransferase 1 from Rattus norvegicus (Rat).